The following is a 161-amino-acid chain: Putative acetyltransferase SAV0762 (161 aa).

Belongs to the transferase hexapeptide repeat family.

The polypeptide is Putative acetyltransferase SAV0762 (Staphylococcus aureus (strain Mu50 / ATCC 700699)).